Reading from the N-terminus, the 372-residue chain is MRSKVTGAQRWVVKIGSALLTADGKGLDRGAMAVWVEQMVALREAGVELVLVSSGAVAAGMSQLGWTSRPSAMNELQAAASIGQMRLVQAWESSFGEHGKHTAQILLTHDDLSDRKRYLNARSTLRTLVDLGVVPVINENDTVVTDEIRFGDNDTLAALVANLVEADLLVILTDRDGMFDADPRNNPEAQLIYEARADDPALDAVAGGTGGALGRGGMQTKLRAARLAARSGAHTIIIGGRIERVLDRLKAGERLGTLLSPERGMLAARKQWLAGHLQTRGTLVLDDGAVKALRESNKSLLPVGVKTVQGSFRRGEMVVCVGQDGHEIARGLANYSALEAQKIIGQPSDAIESLLGYSAEPELVHRDNLVLV.

ATP is bound at residue lysine 14. 3 residues coordinate substrate: serine 54, aspartate 141, and asparagine 153. Residue 173–174 coordinates ATP; that stretch reads TD. The PUA domain occupies 280–358; that stretch reads RGTLVLDDGA…DAIESLLGYS (79 aa).

It belongs to the glutamate 5-kinase family.

It is found in the cytoplasm. The enzyme catalyses L-glutamate + ATP = L-glutamyl 5-phosphate + ADP. Its pathway is amino-acid biosynthesis; L-proline biosynthesis; L-glutamate 5-semialdehyde from L-glutamate: step 1/2. Its function is as follows. Catalyzes the transfer of a phosphate group to glutamate to form L-glutamate 5-phosphate. In Pseudomonas entomophila (strain L48), this protein is Glutamate 5-kinase.